Here is a 284-residue protein sequence, read N- to C-terminus: Bifunctional protein FolD (284 aa).

NADP(+) contacts are provided by residues 166 to 168 (GRS) and Ser-191.

Belongs to the tetrahydrofolate dehydrogenase/cyclohydrolase family. Homodimer.

It catalyses the reaction (6R)-5,10-methylene-5,6,7,8-tetrahydrofolate + NADP(+) = (6R)-5,10-methenyltetrahydrofolate + NADPH. The enzyme catalyses (6R)-5,10-methenyltetrahydrofolate + H2O = (6R)-10-formyltetrahydrofolate + H(+). Its pathway is one-carbon metabolism; tetrahydrofolate interconversion. In terms of biological role, catalyzes the oxidation of 5,10-methylenetetrahydrofolate to 5,10-methenyltetrahydrofolate and then the hydrolysis of 5,10-methenyltetrahydrofolate to 10-formyltetrahydrofolate. The sequence is that of Bifunctional protein FolD from Leptospira interrogans serogroup Icterohaemorrhagiae serovar copenhageni (strain Fiocruz L1-130).